A 374-amino-acid polypeptide reads, in one-letter code: Aminomethyltransferase (374 aa).

Belongs to the GcvT family. As to quaternary structure, the glycine cleavage system is composed of four proteins: P, T, L and H.

It catalyses the reaction N(6)-[(R)-S(8)-aminomethyldihydrolipoyl]-L-lysyl-[protein] + (6S)-5,6,7,8-tetrahydrofolate = N(6)-[(R)-dihydrolipoyl]-L-lysyl-[protein] + (6R)-5,10-methylene-5,6,7,8-tetrahydrofolate + NH4(+). The glycine cleavage system catalyzes the degradation of glycine. The polypeptide is Aminomethyltransferase (Prochlorococcus marinus (strain MIT 9303)).